We begin with the raw amino-acid sequence, 349 residues long: Draxin (349 aa).

Residues 1-25 (MAASSTFFSPSLFLCVLVLIDITLA) form the signal peptide. A compositionally biased stretch (polar residues) spans 40 to 53 (NHLQNQETWPQQPR). Disordered stretches follow at residues 40–63 (NHLQNQETWPQQPRSGHHHKHGLA), 119–166 (PHAE…LYKK), and 246–273 (WPSAKKKEKRRSKSSNGGNETSSAEGEP). The segment covering 54–63 (SGHHHKHGLA) has biased composition (basic residues). Over residues 119–139 (PHAERENQSPGSERGKKQNRE) the composition is skewed to basic and acidic residues. Composition is skewed to basic residues over residues 140 to 155 (QRRHSRRDRLKHHRGK) and 249 to 258 (AKKKEKRRSK). N-linked (GlcNAc...) asparagine glycosylation occurs at Asn264.

This sequence belongs to the draxin family.

It localises to the secreted. Its function is as follows. Chemorepulsive axon guidance protein required for the development of spinal cord and forebrain commissures. Acts as a chemorepulsive guidance protein for commissural axons during development. Able to inhibit or repel neurite outgrowth from dorsal spinal cord and cortical explants in vitro. Binds directly to the neurites and growth cones. In Gallus gallus (Chicken), this protein is Draxin.